A 124-amino-acid chain; its full sequence is Protein TAR1 (124 aa).

Residues 80 to 124 are disordered; sequence KNRTPRHTGFSPSMTSCSKEHRQGTAPKLPSPNYNSGTEGTRFQI. Over residues 111–124 the composition is skewed to polar residues; that stretch reads PNYNSGTEGTRFQI.

The protein localises to the mitochondrion. In terms of biological role, may be involved in mtDNA stability or mitochondrial gene expression regulation at the post-transcriptional level. In Saccharomyces cerevisiae (strain ATCC 204508 / S288c) (Baker's yeast), this protein is Protein TAR1 (TAR1).